Here is a 302-residue protein sequence, read N- to C-terminus: Oxygen-dependent coproporphyrinogen-III oxidase (302 aa).

Ser90 is a binding site for substrate. A divalent metal cation-binding residues include His94 and His104. His104 serves as the catalytic Proton donor. Residue 106 to 108 coordinates substrate; that stretch reads NVR. The a divalent metal cation site is built by His143 and His173. Positions 238–273 are important for dimerization; sequence YVEFNLIYDRGTIFGLQSNGRTESILLSMPPIVKWR.

Belongs to the aerobic coproporphyrinogen-III oxidase family. In terms of assembly, homodimer. It depends on a divalent metal cation as a cofactor.

Its subcellular location is the cytoplasm. It carries out the reaction coproporphyrinogen III + O2 + 2 H(+) = protoporphyrinogen IX + 2 CO2 + 2 H2O. The protein operates within porphyrin-containing compound metabolism; protoporphyrin-IX biosynthesis; protoporphyrinogen-IX from coproporphyrinogen-III (O2 route): step 1/1. Involved in the heme biosynthesis. Catalyzes the aerobic oxidative decarboxylation of propionate groups of rings A and B of coproporphyrinogen-III to yield the vinyl groups in protoporphyrinogen-IX. In Methylobacillus flagellatus (strain ATCC 51484 / DSM 6875 / VKM B-1610 / KT), this protein is Oxygen-dependent coproporphyrinogen-III oxidase.